The following is a 1653-amino-acid chain: Alpha-2-macroglobulin (1653 aa).

Positions Met1–Gly17 are cleaved as a signal peptide. Residue Cys18 is the site of N-palmitoyl cysteine attachment. Cys18 carries S-diacylglycerol cysteine lipidation. The isoglutamyl cysteine thioester (Cys-Gln) cross-link spans Cys1187–Gln1190. A coiled-coil region spans residues Asn1559–Lys1589.

It belongs to the protease inhibitor I39 (alpha-2-macroglobulin) family. Bacterial alpha-2-macroglobulin subfamily. As to quaternary structure, may form homooligomers.

Its subcellular location is the cell inner membrane. Its function is as follows. Protects the bacterial cell from host peptidases. Acts by a 'trapping' mechanism. Cleavage of the bait-region domain by host peptidases leads to a global conformational change, which results in entrapment of the host peptidase and activation of the thioester bond that covalently binds the attacking host peptidase. Trapped peptidases are still active except against very large substrates. May protect the entire periplam, including the lipoproteins anchored to the periplasmic side of the outer membrane, against intruding endopeptidases. In Escherichia coli (strain K12), this protein is Alpha-2-macroglobulin (yfhM).